Here is a 127-residue protein sequence, read N- to C-terminus: Fluoride-specific ion channel FluC (127 aa).

Transmembrane regions (helical) follow at residues 4-24 (LLLAVFIGGGTGSVARWMLSM), 35-55 (LGTLAANLLGAFIIGMGFAWF), 71-91 (TGFCGGLTTFSTFSAEVVFLL), and 103-123 (VLVNLLGSFAMTALAFWIFSA). Na(+) is bound by residues G75 and T78.

This sequence belongs to the fluoride channel Fluc/FEX (TC 1.A.43) family.

Its subcellular location is the cell inner membrane. It carries out the reaction fluoride(in) = fluoride(out). With respect to regulation, na(+) is not transported, but it plays an essential structural role and its presence is essential for fluoride channel function. Its function is as follows. Fluoride-specific ion channel. Important for reducing fluoride concentration in the cell, thus reducing its toxicity. The chain is Fluoride-specific ion channel FluC from Escherichia fergusonii (strain ATCC 35469 / DSM 13698 / CCUG 18766 / IAM 14443 / JCM 21226 / LMG 7866 / NBRC 102419 / NCTC 12128 / CDC 0568-73).